The chain runs to 141 residues: Hemoglobin subunit alpha (141 aa).

Positions 1–141 (VLSPADKSNV…VSTVLVSKYR (141 aa)) constitute a Globin domain. Serine 3 is subject to Phosphoserine. An N6-succinyllysine mark is found at lysine 7 and lysine 11. Lysine 16 is modified (N6-acetyllysine; alternate). The residue at position 16 (lysine 16) is an N6-succinyllysine; alternate. Tyrosine 24 bears the Phosphotyrosine mark. A Phosphoserine modification is found at serine 35. Lysine 40 bears the N6-succinyllysine mark. Serine 49 carries the post-translational modification Phosphoserine. Residue histidine 58 participates in O2 binding. A heme b-binding site is contributed by histidine 87. At serine 102 the chain carries Phosphoserine. The residue at position 108 (threonine 108) is a Phosphothreonine. Serine 124 bears the Phosphoserine mark. Residue threonine 134 is modified to Phosphothreonine. Phosphoserine is present on serine 138.

Belongs to the globin family. As to quaternary structure, heterotetramer of two alpha chains and two beta chains. Red blood cells.

Functionally, involved in oxygen transport from the lung to the various peripheral tissues. Its function is as follows. Hemopressin acts as an antagonist peptide of the cannabinoid receptor CNR1. Hemopressin-binding efficiently blocks cannabinoid receptor CNR1 and subsequent signaling. The polypeptide is Hemoglobin subunit alpha (HBA) (Chalinolobus morio (Chocolate-wattled bat)).